The following is a 175-amino-acid chain: Small ribosomal subunit protein uS5 (175 aa).

The S5 DRBM domain occupies 11 to 74 (LSEVLVDVNR…QAAKKRMMKV (64 aa)).

It belongs to the universal ribosomal protein uS5 family. As to quaternary structure, part of the 30S ribosomal subunit. Contacts proteins S4 and S8.

With S4 and S12 plays an important role in translational accuracy. Functionally, located at the back of the 30S subunit body where it stabilizes the conformation of the head with respect to the body. The sequence is that of Small ribosomal subunit protein uS5 from Rickettsia typhi (strain ATCC VR-144 / Wilmington).